The sequence spans 144 residues: MRLNTLSPAAGSKSAPKRVGRGIGSGLGKTAGRGHKGQKSRSGGGVRVGFEGGQMPLKIRLPKFGFTSRRALVTAEVRLLELAKVNGDVIDLNTLKDANVLTRNIQFAKIVLSGTIERPVTVKGLKVTKGARAAIEAAGGKIEE.

The segment at 1-49 (MRLNTLSPAAGSKSAPKRVGRGIGSGLGKTAGRGHKGQKSRSGGGVRVG) is disordered. The segment covering 21–31 (RGIGSGLGKTA) has biased composition (gly residues).

Belongs to the universal ribosomal protein uL15 family. As to quaternary structure, part of the 50S ribosomal subunit.

Its function is as follows. Binds to the 23S rRNA. The chain is Large ribosomal subunit protein uL15 from Shewanella denitrificans (strain OS217 / ATCC BAA-1090 / DSM 15013).